The sequence spans 372 residues: Cyanuric acid amidohydrolase (372 aa).

The segment at 1-105 (MPTTLRRAHV…IVFEAREVDE (105 aa)) is RU A. Residues arginine 56 and 84–85 (SG) each bind substrate. The tract at residues 115 to 252 (SLALGRARTP…HEIMVAGMSR (138 aa)) is RU B. Residue lysine 165 is part of the active site. Substrate-binding positions include arginine 197 and 235–236 (SG). The Nucleophile role is filled by serine 235. Positions 258–372 (LAIDHGVMRD…GPVAIIVERT (115 aa)) are RU C. Glutamate 305 provides a ligand contact to Mg(2+). Residues arginine 332 and 351 to 352 (SG) each bind substrate. Mg(2+) contacts are provided by alanine 354, glutamine 357, glycine 358, proline 359, and glycine 362.

Belongs to the cyclic amide hydrolase (CyAH) family. In terms of assembly, homotetramer.

The catalysed reaction is cyanurate + H2O = 1-carboxybiuret + H(+). It functions in the pathway xenobiotic degradation; atrazine degradation; biuret from cyanurate: step 1/1. Its activity is regulated as follows. Inhibited by barbituric acid. Its function is as follows. Responsible for the hydrolysis of cyanuric acid, an intermediate formed during catabolism of s-triazine based compounds in herbicides such as atrazine and polymers such as melamine. Catalyzes the hydrolytic opening of the s-triazine ring of cyanuric acid (2,4,6-trihydroxy-s-triazine) to yield carbon dioxide and carboxybiuret, which spontaneously decarboxylates to biuret. This Bradyrhizobium sp. (strain ORS 375) protein is Cyanuric acid amidohydrolase.